The chain runs to 328 residues: GMP reductase (328 aa).

Cys174 functions as the Thioimidate intermediate in the catalytic mechanism. 203–226 serves as a coordination point for NADP(+); it reads IIADGGIRTHGDIAKSIRFGASMV.

The protein belongs to the IMPDH/GMPR family. GuaC type 2 subfamily.

The catalysed reaction is IMP + NH4(+) + NADP(+) = GMP + NADPH + 2 H(+). In terms of biological role, catalyzes the irreversible NADPH-dependent deamination of GMP to IMP. It functions in the conversion of nucleobase, nucleoside and nucleotide derivatives of G to A nucleotides, and in maintaining the intracellular balance of A and G nucleotides. This Staphylococcus saprophyticus subsp. saprophyticus (strain ATCC 15305 / DSM 20229 / NCIMB 8711 / NCTC 7292 / S-41) protein is GMP reductase.